Consider the following 228-residue polypeptide: Isoprenyl transferase (228 aa).

The active site involves aspartate 9. Aspartate 9 lines the Mg(2+) pocket. Residues 10-13, tryptophan 14, arginine 22, histidine 26, and 54-56 each bind substrate; these read GNGR and STE. Asparagine 57 serves as the catalytic Proton acceptor. Substrate is bound by residues tryptophan 58, arginine 60, arginine 175, and 181 to 183; that span reads RMS. Glutamate 194 provides a ligand contact to Mg(2+).

This sequence belongs to the UPP synthase family. Homodimer. The cofactor is Mg(2+).

Catalyzes the condensation of isopentenyl diphosphate (IPP) with allylic pyrophosphates generating different type of terpenoids. The polypeptide is Isoprenyl transferase (Treponema pallidum (strain Nichols)).